The primary structure comprises 310 residues: MKVGIVGAGMVGSASAYALTMLGIASEIVLVDYNTDLAQAQAEDISHAVPFVSATLVRAGDYGDFAGAGVVIISAGVSQKRGETRLELLGRNAEVFRQVVDQVLAAAPNAILLIASNPVDIMTDIATRLSGLAPQRVIGSGTILDTARFRSLLGRYLEISPQSVHAYVLGEHGDSEVLAWSNAMVGAVPLMSFAKQAGKPVTDTVRSEIDAGVRHAADKIIKGKGATYYGIGAGLARIVKAIASDQRDVLSVSSVTAELAGVTNVAASVPRVIGSSGILMDLVPDLDETERIALAKSARMLKDLALSVPC.

Residues Val-11, Asp-32, Tyr-62, and 76-77 (GV) each bind NAD(+). Substrate contacts are provided by residues Gln-79, Arg-85, and 117 to 120 (NPVD). Residues 115–117 (ASN) and Ser-140 each bind NAD(+). Position 145-148 (145-148 (DTAR)) interacts with substrate. The beta-D-fructose 1,6-bisphosphate site is built by Arg-150 and His-165. Residue His-172 is the Proton acceptor of the active site. Position 227 (Thr-227) interacts with substrate.

It belongs to the LDH/MDH superfamily. LDH family. As to quaternary structure, homotetramer.

It is found in the cytoplasm. The catalysed reaction is (S)-lactate + NAD(+) = pyruvate + NADH + H(+). Its pathway is fermentation; pyruvate fermentation to lactate; (S)-lactate from pyruvate: step 1/1. With respect to regulation, allosterically activated by fructose 1,6-bisphosphate (FBP). Its function is as follows. Catalyzes the conversion of lactate to pyruvate. The protein is L-lactate dehydrogenase of Allorhizobium ampelinum (strain ATCC BAA-846 / DSM 112012 / S4) (Agrobacterium vitis (strain S4)).